A 307-amino-acid chain; its full sequence is MKFLFVVDPIKNINPLKDSSAALMQASSKKKIEVWICTPQDLEARGDEVWASSWRAEVCPWVSFKENKCIPLAEFNCIWMRKDPPVNEGYLYATHLLEVAERKGVKVINKPSSLRAWNEKLGALRYSHLMAPTIVASKVKDLINFAQINHDVVVKPLGGKGGQGVIRLTKDSPGIKAMIELITSQEQLPVMMQKFIPEVKEGDKRIIIVNGEPIGSINRIPQGGDFRSNLAMGGKAEKTNLTAKEKKICTELSQHFKDEGLFFVGIDVINEMLSEINVTSPTGLREIETLSNKSVSDKVIEKLLEII.

Residues 120–304 (KLGALRYSHL…VSDKVIEKLL (185 aa)) form the ATP-grasp domain. Residue 146 to 202 (AQINHDVVVKPLGGKGGQGVIRLTKDSPGIKAMIELITSQEQLPVMMQKFIPEVKEG) participates in ATP binding. Mg(2+) is bound by residues E275 and N277.

It belongs to the prokaryotic GSH synthase family. It depends on Mg(2+) as a cofactor. Requires Mn(2+) as cofactor.

It catalyses the reaction gamma-L-glutamyl-L-cysteine + glycine + ATP = glutathione + ADP + phosphate + H(+). It participates in sulfur metabolism; glutathione biosynthesis; glutathione from L-cysteine and L-glutamate: step 2/2. The polypeptide is Glutathione synthetase (Prochlorococcus marinus subsp. pastoris (strain CCMP1986 / NIES-2087 / MED4)).